Consider the following 160-residue polypeptide: S-ribosylhomocysteine lyase (160 aa).

Fe cation contacts are provided by His-57, His-61, and Cys-127.

The protein belongs to the LuxS family. Homodimer. It depends on Fe cation as a cofactor.

The enzyme catalyses S-(5-deoxy-D-ribos-5-yl)-L-homocysteine = (S)-4,5-dihydroxypentane-2,3-dione + L-homocysteine. Functionally, involved in the synthesis of autoinducer 2 (AI-2) which is secreted by bacteria and is used to communicate both the cell density and the metabolic potential of the environment. The regulation of gene expression in response to changes in cell density is called quorum sensing. Catalyzes the transformation of S-ribosylhomocysteine (RHC) to homocysteine (HC) and 4,5-dihydroxy-2,3-pentadione (DPD). This Streptococcus pyogenes serotype M2 (strain MGAS10270) protein is S-ribosylhomocysteine lyase.